The chain runs to 282 residues: Probable protein phosphatase 2C 45 (282 aa).

The PPM-type phosphatase domain occupies 27–272; sequence SYGYASSPGK…DNITCVVVRF (246 aa). The Mn(2+) site is built by Asp-63, Gly-64, Asp-224, and Asp-263.

This sequence belongs to the PP2C family. The cofactor is Mg(2+). It depends on Mn(2+) as a cofactor.

The catalysed reaction is O-phospho-L-seryl-[protein] + H2O = L-seryl-[protein] + phosphate. It carries out the reaction O-phospho-L-threonyl-[protein] + H2O = L-threonyl-[protein] + phosphate. The sequence is that of Probable protein phosphatase 2C 45 from Oryza sativa subsp. japonica (Rice).